The primary structure comprises 496 residues: Beta-amylase (496 aa).

Substrate-binding residues include Asp54, His94, and Asp102. The active-site Proton donor is Glu187. 3 residues coordinate substrate: Lys296, His301, and Thr343. Glu381 acts as the Proton acceptor in catalysis. Substrate is bound by residues 382-383 (NA) and Arg421.

The protein belongs to the glycosyl hydrolase 14 family.

The catalysed reaction is Hydrolysis of (1-&gt;4)-alpha-D-glucosidic linkages in polysaccharides so as to remove successive maltose units from the non-reducing ends of the chains.. The protein is Beta-amylase (BMY1) of Vigna unguiculata (Cowpea).